Here is a 183-residue protein sequence, read N- to C-terminus: Ribulose bisphosphate carboxylase small subunit, chloroplastic (183 aa).

A chloroplast-targeting transit peptide spans 1–59 (MASSMISSGTVATVSADRPAPAQARMVAPFTGLKSSSASPVTRKSNDITSIASNGGRVQ).

Belongs to the RuBisCO small chain family. As to quaternary structure, heterohexadecamer of 8 large and 8 small subunits.

It localises to the plastid. The protein localises to the chloroplast. In terms of biological role, ruBisCO catalyzes two reactions: the carboxylation of D-ribulose 1,5-bisphosphate, the primary event in carbon dioxide fixation, as well as the oxidative fragmentation of the pentose substrate. Both reactions occur simultaneously and in competition at the same active site. Although the small subunit is not catalytic it is essential for maximal activity. The sequence is that of Ribulose bisphosphate carboxylase small subunit, chloroplastic from Malus sp. (Crab apple).